Reading from the N-terminus, the 172-residue chain is Peptidyl-prolyl cis-trans isomerase (172 aa).

The region spanning 7–170 (FFDMSVGGQP…KKVVVEDCGQ (164 aa)) is the PPIase cyclophilin-type domain.

This sequence belongs to the cyclophilin-type PPIase family. Not glycosylated. Expressed in pollen.

Its subcellular location is the cytoplasm. It catalyses the reaction [protein]-peptidylproline (omega=180) = [protein]-peptidylproline (omega=0). Its activity is regulated as follows. Binds cyclosporin A (CsA). CsA mediates some of its effects via an inhibitory action on PPIase. In terms of biological role, PPIases accelerate the folding of proteins. It catalyzes the cis-trans isomerization of proline imidic peptide bonds in oligopeptides. The protein is Peptidyl-prolyl cis-trans isomerase (PCKR1) of Catharanthus roseus (Madagascar periwinkle).